A 248-amino-acid chain; its full sequence is Pyridoxine 5'-phosphate synthase (248 aa).

N11 serves as a coordination point for 3-amino-2-oxopropyl phosphate. 13 to 14 (DH) is a 1-deoxy-D-xylulose 5-phosphate binding site. R22 is a 3-amino-2-oxopropyl phosphate binding site. H47 acts as the Proton acceptor in catalysis. 2 residues coordinate 1-deoxy-D-xylulose 5-phosphate: R49 and H54. E74 acts as the Proton acceptor in catalysis. Position 104 (T104) interacts with 1-deoxy-D-xylulose 5-phosphate. The active-site Proton donor is the H198. Residues G199 and 220-221 (GH) each bind 3-amino-2-oxopropyl phosphate.

The protein belongs to the PNP synthase family. Homooctamer; tetramer of dimers.

Its subcellular location is the cytoplasm. It catalyses the reaction 3-amino-2-oxopropyl phosphate + 1-deoxy-D-xylulose 5-phosphate = pyridoxine 5'-phosphate + phosphate + 2 H2O + H(+). The protein operates within cofactor biosynthesis; pyridoxine 5'-phosphate biosynthesis; pyridoxine 5'-phosphate from D-erythrose 4-phosphate: step 5/5. In terms of biological role, catalyzes the complicated ring closure reaction between the two acyclic compounds 1-deoxy-D-xylulose-5-phosphate (DXP) and 3-amino-2-oxopropyl phosphate (1-amino-acetone-3-phosphate or AAP) to form pyridoxine 5'-phosphate (PNP) and inorganic phosphate. This chain is Pyridoxine 5'-phosphate synthase, found in Ruegeria pomeroyi (strain ATCC 700808 / DSM 15171 / DSS-3) (Silicibacter pomeroyi).